Consider the following 526-residue polypeptide: Peptide chain release factor 3 (526 aa).

Residues 9–277 form the tr-type G domain; it reads DKRRTFAIIS…GIVEWAPIPQ (269 aa). GTP-binding positions include 18–25, 86–90, and 140–143; these read SHPDAGKT, DTPGH, and NKLD.

The protein belongs to the TRAFAC class translation factor GTPase superfamily. Classic translation factor GTPase family. PrfC subfamily.

It localises to the cytoplasm. Its function is as follows. Increases the formation of ribosomal termination complexes and stimulates activities of RF-1 and RF-2. It binds guanine nucleotides and has strong preference for UGA stop codons. It may interact directly with the ribosome. The stimulation of RF-1 and RF-2 is significantly reduced by GTP and GDP, but not by GMP. This Shewanella halifaxensis (strain HAW-EB4) protein is Peptide chain release factor 3.